The sequence spans 379 residues: Phospho-N-acetylmuramoyl-pentapeptide-transferase (379 aa).

Helical transmembrane passes span 27 to 47 (FRTAFASLTALFMGLIIGPAV), 76 to 96 (TMGGVLITIAIIVPTLLWADL), 100 to 120 (FVWIAMLATIAFGAIGFTDDY), 135 to 155 (AKMGLQILVAILVAISLVLVQ), 185 to 205 (PHIWIIAYIPFLAFVAIVLVG), 218 to 238 (GLAIGCTVIAAGALTVLTYVS), 255 to 275 (VGELSIFCGAMVGSAIGFLWY), 283 to 303 (FMGDVGSLALGGAIGTVAVII), 307 to 327 (LLLPFIGGVFVLEALSVILQV), and 356 to 376 (KIIVRFWIASLVFALFALTTL).

Belongs to the glycosyltransferase 4 family. MraY subfamily. Requires Mg(2+) as cofactor.

Its subcellular location is the cell inner membrane. The catalysed reaction is UDP-N-acetyl-alpha-D-muramoyl-L-alanyl-gamma-D-glutamyl-meso-2,6-diaminopimeloyl-D-alanyl-D-alanine + di-trans,octa-cis-undecaprenyl phosphate = di-trans,octa-cis-undecaprenyl diphospho-N-acetyl-alpha-D-muramoyl-L-alanyl-D-glutamyl-meso-2,6-diaminopimeloyl-D-alanyl-D-alanine + UMP. It functions in the pathway cell wall biogenesis; peptidoglycan biosynthesis. Functionally, catalyzes the initial step of the lipid cycle reactions in the biosynthesis of the cell wall peptidoglycan: transfers peptidoglycan precursor phospho-MurNAc-pentapeptide from UDP-MurNAc-pentapeptide onto the lipid carrier undecaprenyl phosphate, yielding undecaprenyl-pyrophosphoryl-MurNAc-pentapeptide, known as lipid I. This is Phospho-N-acetylmuramoyl-pentapeptide-transferase from Koribacter versatilis (strain Ellin345).